The chain runs to 473 residues: MTPPRKLHIKSYGCQMNVYDAQRMVDTLAAEGFVETASAEEADLVILNTCHIREKASEKVYSELGRLRAAKDQAARDGREMSVVVAGCVAQAEGDEIIRRAPVVDVVVGPQSYHHLPQLLARAKADGRALETEFPVEDKFGFLPQPSRQAIRARGISAFVTVQEGCDKFCTFCVVPYTRGAEVSRPVAKIVEDVQRLADNGVREITLIGQNVNAYHGDGPDGRPWPFGKLLHRLADIPGIVRLRYSTSHPRDVEDSLIEAHRDLGALMPFVHLPVQSGSDRILEAMNRRHTADDYRRVVDRFRHVRQDIAFSSDFIVGFPGETEQDFTATLALVTQIGYAGAYSFKYSPRPGTPAAEMKETVSTADMDERLVRLQNLIDSQQSAFNRAAVGTTVDVLFERAARNPGQIVGRTAYLQPAHVVASADIIGQILPVTVASLERYSLLGSLASAPASRASADDAPPVGASSPAIMGV.

The region spanning 5 to 125 (RKLHIKSYGC…LPQLLARAKA (121 aa)) is the MTTase N-terminal domain. Residues C14, C50, C88, C166, C170, and C173 each coordinate [4Fe-4S] cluster. Positions 152–384 (RARGISAFVT…QNLIDSQQSA (233 aa)) constitute a Radical SAM core domain. The TRAM domain maps to 387–449 (RAAVGTTVDV…RYSLLGSLAS (63 aa)). A compositionally biased stretch (low complexity) spans 453–462 (SRASADDAPP). The tract at residues 453-473 (SRASADDAPPVGASSPAIMGV) is disordered.

Belongs to the methylthiotransferase family. MiaB subfamily. Monomer. The cofactor is [4Fe-4S] cluster.

The protein localises to the cytoplasm. It carries out the reaction N(6)-dimethylallyladenosine(37) in tRNA + (sulfur carrier)-SH + AH2 + 2 S-adenosyl-L-methionine = 2-methylsulfanyl-N(6)-dimethylallyladenosine(37) in tRNA + (sulfur carrier)-H + 5'-deoxyadenosine + L-methionine + A + S-adenosyl-L-homocysteine + 2 H(+). In terms of biological role, catalyzes the methylthiolation of N6-(dimethylallyl)adenosine (i(6)A), leading to the formation of 2-methylthio-N6-(dimethylallyl)adenosine (ms(2)i(6)A) at position 37 in tRNAs that read codons beginning with uridine. This Nitrobacter hamburgensis (strain DSM 10229 / NCIMB 13809 / X14) protein is tRNA-2-methylthio-N(6)-dimethylallyladenosine synthase.